We begin with the raw amino-acid sequence, 555 residues long: Hydroxylamine reductase (555 aa).

[4Fe-4S] cluster-binding residues include C3, C6, C18, and C25. Residues H252, E276, C320, C407, C435, C460, E494, and K496 each contribute to the hybrid [4Fe-2O-2S] cluster site. C407 carries the post-translational modification Cysteine persulfide.

Belongs to the HCP family. [4Fe-4S] cluster is required as a cofactor. Requires hybrid [4Fe-2O-2S] cluster as cofactor.

It localises to the cytoplasm. It carries out the reaction A + NH4(+) + H2O = hydroxylamine + AH2 + H(+). In terms of biological role, catalyzes the reduction of hydroxylamine to form NH(3) and H(2)O. The polypeptide is Hydroxylamine reductase (Burkholderia ambifaria (strain MC40-6)).